The sequence spans 143 residues: Ribonuclease H (143 aa).

Residues 1–140 form the RNase H type-1 domain; it reads MKVEIYTDGA…VDALANLGIE (140 aa). Mg(2+) is bound by residues D8, E46, D68, and D132.

Belongs to the RNase H family. In terms of assembly, monomer. Requires Mg(2+) as cofactor.

It localises to the cytoplasm. It catalyses the reaction Endonucleolytic cleavage to 5'-phosphomonoester.. Its function is as follows. Endonuclease that specifically degrades the RNA of RNA-DNA hybrids. In Legionella pneumophila (strain Paris), this protein is Ribonuclease H.